A 193-amino-acid polypeptide reads, in one-letter code: NAD(P)H-quinone oxidoreductase subunit I (193 aa).

2 4Fe-4S ferredoxin-type domains span residues 55–84 (GRIHFEFDKCIACEVCVRVCPINLPVVDWE) and 95–124 (KHYSIDFGVCIFCGNCVEYCPTNCLSMTEE). [4Fe-4S] cluster contacts are provided by Cys64, Cys67, Cys70, Cys74, Cys104, Cys107, Cys110, and Cys114. Positions 169-193 (LDPHDLPSGNQRSGKRPEEIIAESD) are disordered.

The protein belongs to the complex I 23 kDa subunit family. NDH-1 is composed of at least 11 different subunits. It depends on [4Fe-4S] cluster as a cofactor.

It is found in the cellular thylakoid membrane. The enzyme catalyses a plastoquinone + NADH + (n+1) H(+)(in) = a plastoquinol + NAD(+) + n H(+)(out). It carries out the reaction a plastoquinone + NADPH + (n+1) H(+)(in) = a plastoquinol + NADP(+) + n H(+)(out). Its function is as follows. NDH-1 shuttles electrons from an unknown electron donor, via FMN and iron-sulfur (Fe-S) centers, to quinones in the respiratory and/or the photosynthetic chain. The immediate electron acceptor for the enzyme in this species is believed to be plastoquinone. Couples the redox reaction to proton translocation, and thus conserves the redox energy in a proton gradient. The polypeptide is NAD(P)H-quinone oxidoreductase subunit I (Rippkaea orientalis (strain PCC 8801 / RF-1) (Cyanothece sp. (strain PCC 8801))).